The primary structure comprises 313 residues: Formimidoylglutamase (313 aa).

Mn(2+) contacts are provided by H130, D155, H157, D159, D241, and D243.

It belongs to the arginase family. It depends on Mn(2+) as a cofactor.

It carries out the reaction N-formimidoyl-L-glutamate + H2O = formamide + L-glutamate. It functions in the pathway amino-acid degradation; L-histidine degradation into L-glutamate; L-glutamate from N-formimidoyl-L-glutamate (hydrolase route): step 1/1. Catalyzes the conversion of N-formimidoyl-L-glutamate to L-glutamate and formamide. The sequence is that of Formimidoylglutamase from Salmonella arizonae (strain ATCC BAA-731 / CDC346-86 / RSK2980).